Reading from the N-terminus, the 664-residue chain is DNA ligase (664 aa).

NAD(+) is bound by residues 32–36 and 80–81; these read DKEYD and SL. Lys-122 (N6-AMP-lysine intermediate) is an active-site residue. Residues Arg-144, Glu-178, and Lys-314 each coordinate NAD(+). The Zn(2+) site is built by Cys-407, Cys-410, Cys-423, and Cys-429. The 78-residue stretch at 587-664 folds into the BRCT domain; sequence IDENPFMDKT…NEEEFSNKIK (78 aa).

This sequence belongs to the NAD-dependent DNA ligase family. LigA subfamily. Mg(2+) serves as cofactor. The cofactor is Mn(2+).

It catalyses the reaction NAD(+) + (deoxyribonucleotide)n-3'-hydroxyl + 5'-phospho-(deoxyribonucleotide)m = (deoxyribonucleotide)n+m + AMP + beta-nicotinamide D-nucleotide.. Its function is as follows. DNA ligase that catalyzes the formation of phosphodiester linkages between 5'-phosphoryl and 3'-hydroxyl groups in double-stranded DNA using NAD as a coenzyme and as the energy source for the reaction. It is essential for DNA replication and repair of damaged DNA. This chain is DNA ligase, found in Clostridium botulinum (strain Okra / Type B1).